The following is a 195-amino-acid chain: uncharacterized protein (195 aa).

The segment covering 1–11 has biased composition (polar residues); sequence MDYIVSPTSSE. A disordered region spans residues 1 to 118; sequence MDYIVSPTSS…LDTEGGFVLS (118 aa). Residues 35-46 are compositionally biased toward acidic residues; the sequence is SPEDITDSDEQN. Positions 47–63 are enriched in low complexity; sequence DTTTTTSEMSSTSSVPS. Positions 82–93 are enriched in basic and acidic residues; it reads SDSKLIFDSDNK. Residues 94-110 are compositionally biased toward acidic residues; sequence DQDDEDDEDDEELEGLD.

This is an uncharacterized protein from Acanthamoeba polyphaga mimivirus (APMV).